The following is a 427-amino-acid chain: Serine/threonine-protein kinase AFC2 (427 aa).

In terms of domain architecture, Protein kinase spans 98–423 (YKIYSKMGEG…AREALRHPFF (326 aa)). Residues 104-112 (MGEGTFGQV) and lysine 127 each bind ATP. Residue aspartate 223 is the Proton acceptor of the active site.

This sequence belongs to the protein kinase superfamily. CMGC Ser/Thr protein kinase family. Lammer subfamily.

The catalysed reaction is L-seryl-[protein] + ATP = O-phospho-L-seryl-[protein] + ADP + H(+). It carries out the reaction L-threonyl-[protein] + ATP = O-phospho-L-threonyl-[protein] + ADP + H(+). The enzyme catalyses L-tyrosyl-[protein] + ATP = O-phospho-L-tyrosyl-[protein] + ADP + H(+). The chain is Serine/threonine-protein kinase AFC2 (AFC2) from Arabidopsis thaliana (Mouse-ear cress).